The following is a 116-amino-acid chain: Protein TCL1B1 (116 aa).

It belongs to the TCL1 family.

This Mus musculus (Mouse) protein is Protein TCL1B1 (Tcl1b1).